Here is a 60-residue protein sequence, read N- to C-terminus: Large ribosomal subunit protein uL30 (60 aa).

The protein belongs to the universal ribosomal protein uL30 family. As to quaternary structure, part of the 50S ribosomal subunit.

The protein is Large ribosomal subunit protein uL30 of Lactobacillus johnsonii (strain CNCM I-12250 / La1 / NCC 533).